A 250-amino-acid polypeptide reads, in one-letter code: Vacuolar protein sorting-associated protein 22 homolog 1 (250 aa).

The stretch at 35 to 55 forms a coiled coil; that stretch reads MKEQLSTFRSQLEEFARKHKN.

This sequence belongs to the SNF8 family. Component of the endosomal sorting complex required for transport II (ESCRT-II), composed of VPS22, VPS25 and VPS36.

It is found in the endosome. Component of the endosomal sorting complex required for transport II (ESCRT-II), which is required for multivesicular body (MVB) formation and sorting of endosomal cargo proteins into MVBs. The ESCRT-II complex is probably involved in the recruitment of the ESCRT-III complex. The polypeptide is Vacuolar protein sorting-associated protein 22 homolog 1 (VP22-1) (Arabidopsis thaliana (Mouse-ear cress)).